Consider the following 69-residue polypeptide: Cytochrome c oxidase subunit 8A, mitochondrial (69 aa).

The transit peptide at Met1 to Arg25 directs the protein to the mitochondrion. The short motif at Ser2 to Leu19 is the SIFI-degron element. At Val26–Gly36 the chain is on the mitochondrial matrix side. The helical transmembrane segment at Thr37–Ser60 threads the bilayer. The Mitochondrial intermembrane segment spans residues His61–Glu69.

Belongs to the cytochrome c oxidase VIII family. As to quaternary structure, component of the cytochrome c oxidase (complex IV, CIV), a multisubunit enzyme composed of 14 subunits. The complex is composed of a catalytic core of 3 subunits MT-CO1, MT-CO2 and MT-CO3, encoded in the mitochondrial DNA, and 11 supernumerary subunits COX4I, COX5A, COX5B, COX6A, COX6B, COX6C, COX7A, COX7B, COX7C, COX8 and NDUFA4, which are encoded in the nuclear genome. The complex exists as a monomer or a dimer and forms supercomplexes (SCs) in the inner mitochondrial membrane with NADH-ubiquinone oxidoreductase (complex I, CI) and ubiquinol-cytochrome c oxidoreductase (cytochrome b-c1 complex, complex III, CIII), resulting in different assemblies (supercomplex SCI(1)III(2)IV(1) and megacomplex MCI(2)III(2)IV(2)). Post-translationally, in response to mitochondrial stress, the precursor protein is ubiquitinated by the SIFI complex in the cytoplasm before mitochondrial import, leading to its degradation. Within the SIFI complex, UBR4 initiates ubiquitin chain that are further elongated or branched by KCMF1.

The protein localises to the mitochondrion inner membrane. It participates in energy metabolism; oxidative phosphorylation. In terms of biological role, component of the cytochrome c oxidase, the last enzyme in the mitochondrial electron transport chain which drives oxidative phosphorylation. The respiratory chain contains 3 multisubunit complexes succinate dehydrogenase (complex II, CII), ubiquinol-cytochrome c oxidoreductase (cytochrome b-c1 complex, complex III, CIII) and cytochrome c oxidase (complex IV, CIV), that cooperate to transfer electrons derived from NADH and succinate to molecular oxygen, creating an electrochemical gradient over the inner membrane that drives transmembrane transport and the ATP synthase. Cytochrome c oxidase is the component of the respiratory chain that catalyzes the reduction of oxygen to water. Electrons originating from reduced cytochrome c in the intermembrane space (IMS) are transferred via the dinuclear copper A center (CU(A)) of subunit 2 and heme A of subunit 1 to the active site in subunit 1, a binuclear center (BNC) formed by heme A3 and copper B (CU(B)). The BNC reduces molecular oxygen to 2 water molecules using 4 electrons from cytochrome c in the IMS and 4 protons from the mitochondrial matrix. This Nycticebus coucang (Slow loris) protein is Cytochrome c oxidase subunit 8A, mitochondrial (COX8A).